The following is a 112-amino-acid chain: Large ribosomal subunit protein uL22 (112 aa).

It belongs to the universal ribosomal protein uL22 family. As to quaternary structure, part of the 50S ribosomal subunit.

Functionally, this protein binds specifically to 23S rRNA; its binding is stimulated by other ribosomal proteins, e.g. L4, L17, and L20. It is important during the early stages of 50S assembly. It makes multiple contacts with different domains of the 23S rRNA in the assembled 50S subunit and ribosome. In terms of biological role, the globular domain of the protein is located near the polypeptide exit tunnel on the outside of the subunit, while an extended beta-hairpin is found that lines the wall of the exit tunnel in the center of the 70S ribosome. The chain is Large ribosomal subunit protein uL22 from Finegoldia magna (strain ATCC 29328 / DSM 20472 / WAL 2508) (Peptostreptococcus magnus).